The primary structure comprises 278 residues: Potassium/proton antiporter CemA (278 aa).

The next 4 helical transmembrane spans lie at I61 to G81, A155 to T175, I203 to I223, and F238 to I258.

It belongs to the CemA family.

It localises to the plastid. The protein resides in the chloroplast inner membrane. It catalyses the reaction K(+)(in) + H(+)(out) = K(+)(out) + H(+)(in). Its function is as follows. Contributes to K(+)/H(+) antiport activity by supporting proton efflux to control proton extrusion and homeostasis in chloroplasts in a light-dependent manner to modulate photosynthesis. Prevents excessive induction of non-photochemical quenching (NPQ) under continuous-light conditions. Indirectly promotes efficient inorganic carbon uptake into chloroplasts. This Porphyra purpurea (Red seaweed) protein is Potassium/proton antiporter CemA.